A 475-amino-acid polypeptide reads, in one-letter code: Serralysin G (475 aa).

A propeptide spanning residues Met-1–Ser-14 is cleaved from the precursor. His-186 serves as a coordination point for Zn(2+). Glu-187 is a catalytic residue. Zn(2+)-binding residues include His-190 and Tyr-226. 30 residues coordinate Ca(2+): Arg-261, Gly-263, Thr-265, Asp-293, Gly-295, Gly-296, Asp-298, Glu-337, Gly-342, Gly-344, Asp-346, Asn-351, Asn-355, Gly-359, Gly-360, Ala-361, Gly-362, Asp-364, Gly-368, Gly-370, Gly-371, Asp-373, Gly-377, Gly-378, Ala-379, Gly-380, Asp-382, Asp-391, Asp-398, and Asp-408. Hemolysin-type calcium-binding repeat units lie at residues Ile-340–Ile-357 and Asp-358–Leu-375.

The protein belongs to the peptidase M10B family. The cofactor is Ca(2+). Zn(2+) is required as a cofactor.

It localises to the secreted. The catalysed reaction is Preferential cleavage of bonds with hydrophobic residues in P1'.. The chain is Serralysin G (prtG) from Dickeya chrysanthemi (Pectobacterium chrysanthemi).